The primary structure comprises 340 residues: SH2 domain-containing adapter protein D (340 aa).

Disordered regions lie at residues 1–77 (MAKW…PKHR), 94–186 (GGPG…QPWE), and 198–230 (VQFD…ERVD). Positions 98-108 (EELEADTEYLD) are enriched in acidic residues. The segment covering 171-186 (PQEDERPADEYDQPWE) has biased composition (basic and acidic residues). The region spanning 240–335 (WFHGPLNRAD…AEHLALLYPV (96 aa)) is the SH2 domain.

In terms of processing, tyrosine phosphorylated by ABL.

Its function is as follows. May function as an adapter protein. The polypeptide is SH2 domain-containing adapter protein D (SHD) (Homo sapiens (Human)).